A 529-amino-acid chain; its full sequence is Protein PNS1 (529 aa).

Residues 1-58 are disordered; it reads MSQQYSYGGGGGAGYPPPQMQPPNSYAQANYQGQPQGAQNQYYNGQQPHHNAPQQYYG. Residues 1–84 lie on the Cytoplasmic side of the membrane; sequence MSQQYSYGGG…LQPKPKFRDP (84 aa). Residues 22 to 48 show a composition bias toward low complexity; that stretch reads PPNSYAQANYQGQPQGAQNQYYNGQQP. Residues 85 to 105 form a helical membrane-spanning segment; sequence IFLVLFLLVFAGFIALSVICL. Topologically, residues 106 to 132 are extracellular; it reads RSYSNADVNVSIGRANVAGSTLNGHTA. Asparagine 114 is a glycosylation site (N-linked (GlcNAc...) asparagine). The helical transmembrane segment at 133–153 threads the bilayer; that stretch reads IMFMICCAVALVLSFVYILLV. Over 154–158 the chain is Cytoplasmic; that stretch reads RTFPK. The chain crosses the membrane as a helical span at residues 159–179; the sequence is IILEATLLLTTLSNVAFCVYL. At 180–184 the chain is on the extracellular side; that stretch reads WVRGN. Residues 185 to 205 traverse the membrane as a helical segment; that stretch reads TAAAIIFTIFAVLSVIAYFFM. The Cytoplasmic portion of the chain corresponds to 206–230; the sequence is RKRIPLAKLILVTVIRTAEQYKSVY. Residues 231–251 traverse the membrane as a helical segment; the sequence is VVALGGLIVETAFSAWTSWVV. Topologically, residues 252–271 are extracellular; sequence VAAYQRFEPSGQAAGSSSSN. Asparagine 271 is a glycosylation site (N-linked (GlcNAc...) asparagine). Residues 272 to 292 form a helical membrane-spanning segment; the sequence is ASIIGIMVFIVFAYYWISEVI. The Cytoplasmic segment spans residues 293-294; sequence KN. The helical transmembrane segment at 295 to 315 threads the bilayer; the sequence is IAFTTVAGIFGVAYYNANKVA. At 316–325 the chain is on the extracellular side; it reads NAAWGAFRRS. Residues 326 to 346 form a helical membrane-spanning segment; that stretch reads MTYSLGSICFGSLIVAILDLL. Topologically, residues 347–362 are cytoplasmic; the sequence is RALFNILQSQAASDGD. The helical transmembrane segment at 363–383 threads the bilayer; the sequence is MTGQILACVAGCCVSCIQGLV. At 384-427 the chain is on the extracellular side; it reads DYFNRYAYINIALYGNGYITAAKETWALLKDRGIDAIINDSLVN. Asparagine 422 carries N-linked (GlcNAc...) asparagine glycosylation. The chain crosses the membrane as a helical span at residues 428–448; sequence IVFNCGAFIIGLLTALFAFIY. The Cytoplasmic segment spans residues 449–464; that stretch reads EQLTNPRYLQNDAGYY. Residues 465 to 485 form a helical membrane-spanning segment; sequence SIVLLVAFGLGFNIALSVGAG. The Extracellular segment spans residues 486–529; that stretch reads SIASGVSTYFVALAEDPYILQGKNPELFEMIRQQYPQVVQGVNH.

Belongs to the CTL (choline transporter-like) family.

The protein resides in the cell membrane. In terms of biological role, probably involved in transport through the plasma membrane. The protein is Protein PNS1 (PNS1) of Mycosarcoma maydis (Corn smut fungus).